The following is a 642-amino-acid chain: Threonine--tRNA ligase (642 aa).

The TGS domain maps to 1–61; sequence MPVITLPDGS…DTDAQLAIIT (61 aa). Residues 243–534 form a catalytic region; sequence DHRKIGKQLD…LTEEFAGFFP (292 aa). Residues cysteine 334, histidine 385, and histidine 511 each contribute to the Zn(2+) site.

The protein belongs to the class-II aminoacyl-tRNA synthetase family. In terms of assembly, homodimer. It depends on Zn(2+) as a cofactor.

It localises to the cytoplasm. It carries out the reaction tRNA(Thr) + L-threonine + ATP = L-threonyl-tRNA(Thr) + AMP + diphosphate + H(+). Catalyzes the attachment of threonine to tRNA(Thr) in a two-step reaction: L-threonine is first activated by ATP to form Thr-AMP and then transferred to the acceptor end of tRNA(Thr). Also edits incorrectly charged L-seryl-tRNA(Thr). The chain is Threonine--tRNA ligase from Pectobacterium carotovorum subsp. carotovorum (strain PC1).